The chain runs to 581 residues: Alpha-amylase 2 (581 aa).

The N-terminal stretch at 1–24 (MNYRRNICLRIGWMLLFAFIPAYA) is a signal peptide. Residues Cys56 and Cys64 are joined by a disulfide bond. Substrate is bound at residue Trp109. Asn147 is a Ca(2+) binding site. The cysteines at positions 176 and 191 are disulfide-linked. Asp202 is a binding site for Ca(2+). Arg231 contributes to the substrate binding site. Ca(2+) is bound by residues Asp233, His237, and Glu257. Catalysis depends on Asp233, which acts as the Nucleophile. 236–237 (KH) serves as a coordination point for substrate. Glu257 functions as the Proton donor in the catalytic mechanism. Substrate is bound at residue Gly261. A disulfide bridge links Cys267 with Cys311. Asn291 carries an N-linked (GlcNAc...) asparagine glycan. Asp325 contacts substrate. A glycan (N-linked (GlcNAc...) asparagine) is linked at Asn332. Arg372 provides a ligand contact to substrate. A lipid anchor (GPI-anchor amidated serine) is attached at Ser551. A propeptide spans 552–581 (EAKTIRSFTKLKLFILLIAVPFALPMIILI) (removed in mature form).

Belongs to the glycosyl hydrolase 13 family. Requires Ca(2+) as cofactor.

Its subcellular location is the cell membrane. It catalyses the reaction Endohydrolysis of (1-&gt;4)-alpha-D-glucosidic linkages in polysaccharides containing three or more (1-&gt;4)-alpha-linked D-glucose units.. In Schizosaccharomyces pombe (strain 972 / ATCC 24843) (Fission yeast), this protein is Alpha-amylase 2 (aah2).